We begin with the raw amino-acid sequence, 304 residues long: MPELALLEEVVDKVRPLLGQGKVADYIPALASVDAGKLGIAVTTVDGETLGAGDYLEPFSIQSISKVFSLTLALTLYEEAEIWSRVGKEPSGHSFNSLVQVELERGKPRNPFINAGALVIADLLQSRLGAPKHRMLELVRQLSQNDKVCFDKQVADSEYQHSARNAAIAYLMKSFGNFQGDVDTVLRTYFHYCALKMNCADLSKAMLYLANRGKSITGTELISQVQTRQLNALLATSGLYDGAGEFAYRVGMPGKSGVGGGIIAVIPGELSICVWSPELDGNGNSLAGTAMLEHLSQRLGRSIF.

The substrate site is built by serine 63, asparagine 114, glutamate 158, asparagine 165, tyrosine 189, tyrosine 240, and valine 258.

It belongs to the glutaminase family. In terms of assembly, homotetramer.

The enzyme catalyses L-glutamine + H2O = L-glutamate + NH4(+). The chain is Glutaminase from Shewanella baltica (strain OS223).